Here is a 57-residue protein sequence, read N- to C-terminus: Large ribosomal subunit protein bL32 (57 aa).

Basic residues predominate over residues 1 to 19 (MAVPKRRMSRANTRSRRAQ). Residues 1 to 20 (MAVPKRRMSRANTRSRRAQW) are disordered.

The protein belongs to the bacterial ribosomal protein bL32 family.

This is Large ribosomal subunit protein bL32 from Mycobacterium avium (strain 104).